A 713-amino-acid polypeptide reads, in one-letter code: MSGVALGIEIVSVFFLALFLLHRYGDFKKQHKLVIVGTLLAWYLCFLIVFIIPLDVSTTIYNRCVARHAVTPAPSNITVLSPTPGIVSNTTAQNHLPSADKLRSSDNSLEECSKPWSYIPRGIMPIFWRVVYWTSQFLTWILMPFMQSYARSGGFSITGKIKTALIENAIYYGTYLLIFGALLIYVAVNPNLHLEWYQLQTIGIAAANTWGLFLLVLLMGYGLVEIPRSQWNGAKKGYLLMKTYFKAAKLMTEKADAEETLEDVMEEVRKVNECIKYNHPLRKCVDTILKKCPAEYQEKMGRNMDDYEDFEEKNISYPSEKTLVKLHKQVIYAVQRHRRTQVQWSILLEQAFHLEDVAKNETSAAKQFVHTFPHQEPESWIMRRLYTPTIEWYWECLLRPWCSRILAVILALFSTVVVWSECTFFSAKPVLSLFAVFIQQAEQTHNYIYVEVVCFLSIFFLSICVYSTVFRIRVFNYYYLASHHQTDAYSLLFSGMLFCRLTPPLCLNFLGLTHMDVSISHQNIEPTAYTSIMGSLRVLPLIADVFYIYYPMLVLILCIATYFSLGTRCLNLLGFQQFMGDNDMTSDLTDEGKELIKREKRKRQRLEDGETRRREWKERYPTNREDTSRNRSVNSDQKEPTYTEMTTNRSSKYTRASNRTERDRIELLQDAEPLDFNADTFNDDPLDSESGRYQPGGRYLSMSQSNSRIFDDV.

The Extracellular portion of the chain corresponds to 1-3 (MSG). Residues 4–21 (VALGIEIVSVFFLALFLL) traverse the membrane as a helical segment. Over 22-32 (HRYGDFKKQHK) the chain is Cytoplasmic. The helical transmembrane segment at 33-53 (LVIVGTLLAWYLCFLIVFIIP) threads the bilayer. The Extracellular portion of the chain corresponds to 54 to 122 (LDVSTTIYNR…SKPWSYIPRG (69 aa)). N-linked (GlcNAc...) asparagine glycosylation is found at Asn76 and Asn89. A helical transmembrane segment spans residues 123–143 (IMPIFWRVVYWTSQFLTWILM). At 144-167 (PFMQSYARSGGFSITGKIKTALIE) the chain is on the cytoplasmic side. Residues 168–188 (NAIYYGTYLLIFGALLIYVAV) form a helical membrane-spanning segment. The Extracellular segment spans residues 189-203 (NPNLHLEWYQLQTIG). The helical transmembrane segment at 204 to 224 (IAAANTWGLFLLVLLMGYGLV) threads the bilayer. Residues 225 to 404 (EIPRSQWNGA…ECLLRPWCSR (180 aa)) are Cytoplasmic-facing. Residues 246-314 (KAAKLMTEKA…DDYEDFEEKN (69 aa)) are a coiled coil. A helical transmembrane segment spans residues 405 to 425 (ILAVILALFSTVVVWSECTFF). The Extracellular portion of the chain corresponds to 426 to 449 (SAKPVLSLFAVFIQQAEQTHNYIY). Residues 450-470 (VEVVCFLSIFFLSICVYSTVF) form a helical membrane-spanning segment. Residues 471-490 (RIRVFNYYYLASHHQTDAYS) lie on the Cytoplasmic side of the membrane. The helical transmembrane segment at 491 to 511 (LLFSGMLFCRLTPPLCLNFLG) threads the bilayer. The Extracellular portion of the chain corresponds to 512–538 (LTHMDVSISHQNIEPTAYTSIMGSLRV). A helical membrane pass occupies residues 539–559 (LPLIADVFYIYYPMLVLILCI). Topologically, residues 560-713 (ATYFSLGTRC…QSNSRIFDDV (154 aa)) are cytoplasmic. Residues 587–620 (DLTDEGKELIKREKRKRQRLEDGETRRREWKERY) adopt a coiled-coil conformation. Positions 600–713 (KRKRQRLEDG…QSNSRIFDDV (114 aa)) are disordered. Positions 605–629 (RLEDGETRRREWKERYPTNREDTSR) are enriched in basic and acidic residues. Residues 643 to 657 (TEMTTNRSSKYTRAS) show a composition bias toward polar residues. Residues 658–667 (NRTERDRIEL) are compositionally biased toward basic and acidic residues. Polar residues predominate over residues 701-713 (SMSQSNSRIFDDV).

This sequence belongs to the LIMR family.

Its subcellular location is the cell membrane. May associate with G-protein coupled receptors and regulate downstream signaling pathways. The chain is G-protein coupled receptor-associated protein LMBRD2 (lmbrd2) from Xenopus laevis (African clawed frog).